A 570-amino-acid polypeptide reads, in one-letter code: Proline--tRNA ligase (570 aa).

It belongs to the class-II aminoacyl-tRNA synthetase family. ProS type 1 subfamily. In terms of assembly, homodimer.

Its subcellular location is the cytoplasm. The enzyme catalyses tRNA(Pro) + L-proline + ATP = L-prolyl-tRNA(Pro) + AMP + diphosphate. In terms of biological role, catalyzes the attachment of proline to tRNA(Pro) in a two-step reaction: proline is first activated by ATP to form Pro-AMP and then transferred to the acceptor end of tRNA(Pro). As ProRS can inadvertently accommodate and process non-cognate amino acids such as alanine and cysteine, to avoid such errors it has two additional distinct editing activities against alanine. One activity is designated as 'pretransfer' editing and involves the tRNA(Pro)-independent hydrolysis of activated Ala-AMP. The other activity is designated 'posttransfer' editing and involves deacylation of mischarged Ala-tRNA(Pro). The misacylated Cys-tRNA(Pro) is not edited by ProRS. This is Proline--tRNA ligase from Shewanella sp. (strain ANA-3).